The following is a 167-amino-acid chain: MNASEAVYKAILDSGVDFVTSVPCANLKTVLNYLNDDKDIQHIPVTREEEGIGVCTGAYLGGRKTALLMQNSGLGNSINAIGSLVKVYKIPILIIISHRGDLKEKISAQIPMGQWTKKLLETVEIPYFSPKTPDEAYKLIKDASELSINMEYPVAILLDALYWEHDK.

It belongs to the ComD family. Heterododecamer composed of 6 subunits alpha and 6 subunits beta.

The enzyme catalyses 3-sulfopyruvate + H(+) = sulfoacetaldehyde + CO2. It participates in cofactor biosynthesis; coenzyme M biosynthesis; sulfoacetaldehyde from phosphoenolpyruvate and sulfite: step 4/4. Its function is as follows. Involved in the biosynthesis of the coenzyme M (2-mercaptoethanesulfonic acid). Catalyzes the decarboxylation of sulfopyruvate to sulfoacetaldehyde. This Methanococcus maripaludis (strain DSM 14266 / JCM 13030 / NBRC 101832 / S2 / LL) protein is Sulfopyruvate decarboxylase subunit alpha (comD).